Here is a 950-residue protein sequence, read N- to C-terminus: Leucine--tRNA ligase 2 (950 aa).

The 'HIGH' region motif lies at 47–57 (PYPNSPFHLGH). The short motif at 631–635 (KMSKS) is the 'KMSKS' region element. ATP is bound at residue Lys-634.

It belongs to the class-I aminoacyl-tRNA synthetase family.

Its subcellular location is the cytoplasm. The enzyme catalyses tRNA(Leu) + L-leucine + ATP = L-leucyl-tRNA(Leu) + AMP + diphosphate. This Metallosphaera sedula (strain ATCC 51363 / DSM 5348 / JCM 9185 / NBRC 15509 / TH2) protein is Leucine--tRNA ligase 2.